The chain runs to 1026 residues: Cadherin-like and PC-esterase domain-containing protein 1 (1026 aa).

The signal sequence occupies residues 1 to 34 (MVCRPVFPCRRRFCPRPFLVGLVVAICLFYQTLT). Asn251, Asn404, Asn413, Asn737, Asn791, and Asn985 each carry an N-linked (GlcNAc...) asparagine glycan.

Belongs to the PC-esterase family.

The sequence is that of Cadherin-like and PC-esterase domain-containing protein 1 (CPED1) from Homo sapiens (Human).